Reading from the N-terminus, the 1132-residue chain is MDMTSCVARRTRSRTESYLNSILNKSKGISGEEEDQSLGCVNSRTEKRRVNMRDACSPSPRKKKRRRRKDDDDDVVFVRTEYPEGKRDDENVGSTSGNLQSKSFDFGDRVCDFDADDRNLGCEEKASNFNPIDDDDDVVFVGTVQRENDHVEDDDNVGSASVISPRVCDFDEDDAKVSGKENPLSPDDDDDVVFLGTIAGENQHVEDVNAGSEVCDILLDDANLRGEEKTYVSDEVVSLSSSSDDEEDPLEELGTDSREEVSGEDRDSGESDMDEDANDSDSSDYVGESSDSSDVESSDSDFVCSEDEEGGTRDDATCEKNPSEKVYHHKKSRTFRRKHNFDVINLLAKSMLESKDVFKEDIFSWDKIAEVDSREDPVVRESSSEKVNEHGKPRERRSFHRVREKNHLNGESFYGGEKLCDGEETINYSTEDSPPLNLRFGCEEPVLIEKTEEEKELDSLWEDMNVALTLEGMHSSTPDKNGDMLCSKGTHDFVLDDEIGLKCVHCAYVAVEIKDISPAMDKYRPSVNDNKKCSDRKGDPLPNRLEFDASDPSSFVAPLDNIEGTVWQYVPGIKDTLYPHQQEGFEFIWKNLAGTTKINELNSVGVKGSGGCIISHKAGTGKTRLTVVFLQSYLKRFPNSHPMVIAPATLMRTWEDEVRKWNVNIPFYNMNSLQLSGYEDAEAVSRLEGNRHHNSIRMVKLVSWWKQKSILGISYPLYEKLAANKNTEGMQVFRRMLVELPGLLVLDEGHTPRNQSSLIWKVLTEVRTEKRIFLSGTLFQNNFKELSNVLCLARPADKDTISSRIHELSKCSQEGEHGRVNEENRIVDLKAMIAHFVHVHEGTILQESLPGLRDCVVVLNPPFQQKKILDRIDTSQNTFEFEHKLSAVSVHPSLYLCCNPTKKEDLVIGPATLGTLKRLRLKYEEGVKTKFLIDFIRISGTVKEKVLVYSQYIDTLKLIMEQLIAECDWTEGEQILLMHGKVEQRDRQHMIDNFNKPDSGSKVLLASTKACSEGISLVGASRVVILDVVWNPSVESQAISRAFRIGQKRAVFIYHLMVKDTSEWNKYCKQSEKHRISELVFSSTNEKDKPINNEVVSKDRILDEMVRHEKLKHIFEKILYHPKKSDMNTSFF.

Disordered regions lie at residues 24 to 104 (NKSK…SKSF), 224 to 331 (LRGE…HHKK), 376 to 396 (DPVV…PRER), and 525 to 544 (PSVN…LPNR). The Nuclear localization signal signature appears at 47–54 (KRRVNMRD). A compositionally biased stretch (basic and acidic residues) spans 81 to 90 (EYPEGKRDDE). Positions 92-103 (VGSTSGNLQSKS) are enriched in polar residues. The segment covering 233–242 (SDEVVSLSSS) has biased composition (low complexity). Over residues 243–254 (SDDEEDPLEELG) the composition is skewed to acidic residues. Residues 255-269 (TDSREEVSGEDRDSG) show a composition bias toward basic and acidic residues. Composition is skewed to acidic residues over residues 270-282 (ESDM…DSDS) and 291-309 (DSSD…EDEE). Composition is skewed to basic and acidic residues over residues 310–326 (GGTR…SEKV), 376–392 (DPVV…EHGK), and 525–539 (PSVN…RKGD). In terms of domain architecture, Helicase ATP-binding spans 603–796 (SVGVKGSGGC…SNVLCLARPA (194 aa)). 616–623 (HKAGTGKT) lines the ATP pocket. Residues 747–750 (DEGH) carry the DEAH box motif. Residues 934-1087 (DFIRISGTVK…ELVFSSTNEK (154 aa)) form the Helicase C-terminal domain.

It belongs to the SNF2/RAD54 helicase family. Interacts with NRPD1.

Its subcellular location is the nucleus. Functionally, probable chromatin remodeling factor. The protein is SNF2 domain-containing protein CLASSY 4 (CLSY4) of Arabidopsis thaliana (Mouse-ear cress).